The following is a 182-amino-acid chain: Adenine phosphoribosyltransferase (182 aa).

The protein belongs to the purine/pyrimidine phosphoribosyltransferase family. Homodimer.

The protein localises to the cytoplasm. It carries out the reaction AMP + diphosphate = 5-phospho-alpha-D-ribose 1-diphosphate + adenine. The protein operates within purine metabolism; AMP biosynthesis via salvage pathway; AMP from adenine: step 1/1. Catalyzes a salvage reaction resulting in the formation of AMP, that is energically less costly than de novo synthesis. This is Adenine phosphoribosyltransferase from Campylobacter fetus subsp. fetus (strain 82-40).